Here is a 397-residue protein sequence, read N- to C-terminus: MSESVHTNTSLWSKGMKAVIVAQFLSAFGDNALLFATLALLKAQFYPEWSQPILQMVFVGAYILFAPFVGQVADSFAKGRVMMFANGLKLLGAASICFGINPFLGYTLVGVGAAAYSPAKYGILGELTTGSKLVKANGLMEASTIAAILLGSVAGGVLADWHVLVALAACALAYGGAVVANIYIPKLAAARPGQSWNLINMTRSFLNACTSLWRNGETRFSLVGTSLFWGAGVTLRFLLVLWVPVALGITDNATPTYLNAMVAIGIVVGAGAAAKLVTLETVSRCMPAGILIGVVVLIFSLQHELLPAYALLMLIGVLGGFFVVPLNALLQERGKKSVGAGNAIAVQNLGENSAMLLMLGIYSLAVMVGIPVVPIGIGFGALFALAITALWIWQRRH.

Topologically, residues 1-17 (MSESVHTNTSLWSKGMK) are periplasmic. Residues 18 to 38 (AVIVAQFLSAFGDNALLFATL) form a helical membrane-spanning segment. Topologically, residues 39–52 (ALLKAQFYPEWSQP) are cytoplasmic. The chain crosses the membrane as a helical span at residues 53–73 (ILQMVFVGAYILFAPFVGQVA). At 74 to 90 (DSFAKGRVMMFANGLKL) the chain is on the periplasmic side. The chain crosses the membrane as a helical span at residues 91–111 (LGAASICFGINPFLGYTLVGV). The Cytoplasmic segment spans residues 112 to 144 (GAAAYSPAKYGILGELTTGSKLVKANGLMEAST). A helical membrane pass occupies residues 145-165 (IAAILLGSVAGGVLADWHVLV). Residue A166 is a topological domain, periplasmic. The helical transmembrane segment at 167–187 (LAACALAYGGAVVANIYIPKL) threads the bilayer. Over 188–226 (AAARPGQSWNLINMTRSFLNACTSLWRNGETRFSLVGTS) the chain is Cytoplasmic. A helical membrane pass occupies residues 227-247 (LFWGAGVTLRFLLVLWVPVAL). Topologically, residues 248 to 256 (GITDNATPT) are periplasmic. A helical membrane pass occupies residues 257-277 (YLNAMVAIGIVVGAGAAAKLV). The Cytoplasmic segment spans residues 278 to 280 (TLE). The chain crosses the membrane as a helical span at residues 281–301 (TVSRCMPAGILIGVVVLIFSL). Topologically, residues 302–304 (QHE) are periplasmic. A helical membrane pass occupies residues 305 to 325 (LLPAYALLMLIGVLGGFFVVP). The Cytoplasmic segment spans residues 326-343 (LNALLQERGKKSVGAGNA). The chain crosses the membrane as a helical span at residues 344 to 364 (IAVQNLGENSAMLLMLGIYSL). Residues 365-366 (AV) are Periplasmic-facing. A helical membrane pass occupies residues 367 to 387 (MVGIPVVPIGIGFGALFALAI). Residues 388-397 (TALWIWQRRH) lie on the Cytoplasmic side of the membrane.

It belongs to the major facilitator superfamily. LplT (TC 2.A.1.42) family.

The protein localises to the cell inner membrane. Its function is as follows. Catalyzes the facilitated diffusion of 2-acyl-glycero-3-phosphoethanolamine (2-acyl-GPE) into the cell. This Escherichia coli (strain SMS-3-5 / SECEC) protein is Lysophospholipid transporter LplT.